We begin with the raw amino-acid sequence, 247 residues long: Homeobox-leucine zipper protein HOX15 (247 aa).

The segment at 1–44 is disordered; it reads MAQDDEDVGLALGLSLGSGGHRRQRESRDEAPSSAAASLLTLRL. Low complexity predominate over residues 32–44; sequence PSSAAASLLTLRL. The segment at residues 91-150 is a DNA-binding region (homeobox); it reads NSRKKLRLSKEQSALLEDRFKEHSTLNPKQKVALAKQLNLRPRQVEVWFQNRRARTKLKQ. The interval 149–193 is leucine-zipper; it reads KQTEVDCELLKRCCETLTEENRRLHRELQQLRALTHSTAAGFFMA. Residues 221-247 are disordered; it reads SPTAAADRTNKPTAPHLFSPFAKSAAC.

It belongs to the HD-ZIP homeobox family. Class II subfamily. Expressed in seedlings, stems, leaf blades and panicles.

The protein resides in the nucleus. Probable transcription factor. This chain is Homeobox-leucine zipper protein HOX15 (HOX15), found in Oryza sativa subsp. japonica (Rice).